The following is a 275-amino-acid chain: 5'-nucleotidase SurE (275 aa).

Residues D14, D15, S46, and N104 each coordinate a divalent metal cation.

This sequence belongs to the SurE nucleotidase family. A divalent metal cation serves as cofactor.

Its subcellular location is the cytoplasm. It carries out the reaction a ribonucleoside 5'-phosphate + H2O = a ribonucleoside + phosphate. In terms of biological role, nucleotidase that shows phosphatase activity on nucleoside 5'-monophosphates. This is 5'-nucleotidase SurE from Synechocystis sp. (strain ATCC 27184 / PCC 6803 / Kazusa).